Consider the following 265-residue polypeptide: MFHNCRMEGSCNAETTSHVTAVVRAPIFCNCFALCLEIPILWDDLLYRHEKLLFGGFTCNGGAELILNSHCCLADAQMWQVHCHCSDSLSLQCLSATQVLKEFLEEFVMGGFVNKKYLWYREFVNSSRPDEINYVGSIMFRNIHYIYFRLSFFSTVHQACMLAIQRCISPELGVVFKSTYNYWLVLKCKSCSLQNYCALKSCAFWVRSIIDRVLREVEKIPVVLHRTTSKAEERRQTALKQAMMYGRCRHIQNLCLVNLNAFLHF.

This sequence belongs to the adenoviridae E4 30 to 34 kDa protein family. In terms of assembly, interacts with E1B-55k.

It localises to the host nucleus. The protein resides in the host cytoplasm. Plays a major role to prevent cellular inhibition of viral genome replication by nuclear bodies. Assembles an SCF-like E3 ubiquitin ligase complex based on the cellular proteins ELOB, ELOC, CUL5 and RBX1, in cooperation with viral E1B-55K. This viral RING-type ligase ubiquitinates cellular substrates prior to proteasomal degradation: p53/TP53, LIG4, MRE11-RAD50-NBS1 (MRN) complex, ITGA3, DAXX and BLM. The sequence is that of Early E4 31 kDa protein from Canine adenovirus serotype 1 (strain RI261) (CAdV-1).